Here is an 88-residue protein sequence, read N- to C-terminus: Small ribosomal subunit protein eS25B (88 aa).

It belongs to the eukaryotic ribosomal protein eS25 family. In terms of assembly, component of the small ribosomal subunit (SSU). Mature yeast ribosomes consist of a small (40S) and a large (60S) subunit. The 40S small subunit contains 1 molecule of ribosomal RNA (18S rRNA) and at least 33 different proteins. The large 60S subunit contains 3 rRNA molecules (25S, 5.8S and 5S rRNA) and at least 46 different proteins.

Its subcellular location is the cytoplasm. Its function is as follows. Component of the ribosome, a large ribonucleoprotein complex responsible for the synthesis of proteins in the cell. The small ribosomal subunit (SSU) binds messenger RNAs (mRNAs) and translates the encoded message by selecting cognate aminoacyl-transfer RNA (tRNA) molecules. The large subunit (LSU) contains the ribosomal catalytic site termed the peptidyl transferase center (PTC), which catalyzes the formation of peptide bonds, thereby polymerizing the amino acids delivered by tRNAs into a polypeptide chain. The nascent polypeptides leave the ribosome through a tunnel in the LSU and interact with protein factors that function in enzymatic processing, targeting, and the membrane insertion of nascent chains at the exit of the ribosomal tunnel. This Schizosaccharomyces pombe (strain 972 / ATCC 24843) (Fission yeast) protein is Small ribosomal subunit protein eS25B (rps2501).